We begin with the raw amino-acid sequence, 406 residues long: MSETFIHSVSENQIIVNDLENNNDYDNEDNVFIDSSVYNQECFMEILKKLEDGKPIHEVVRFTSHSSYTHTIVKTIQGLFLYVVLKSVNIYGSYYDFQRYIGPSMMIGTYACPLYRVQYRINKNDSTGAIIKYSNNLDECETYFNHLCKVFNVLTKRLSLNSICCGVGLSDSFYLMNTKTIKKSSRTRISFIIGNSKYSQHRKLDGVINDVNSFYCALLGCSFHSDNIVWLIDSDLRTFYDKWYTFLQLVQSFQSYIEVVVYYAGHGRSDNGNLKLIMTDGNPVQLSIIASTLTESIKNSDSLCLFIVDCCRDGENVLPFHYPIESFDDKKNIAVLFACKYGELSYESLELNAGIFTRSFVKTITERKNNNISTICNLTDIAIKRIYKNYSGCSLIGNFDCSLLEF.

The caspase-like stretch occupies residues 193 to 374 (IGNSKYSQHR…TERKNNNIST (182 aa)). Residues H266 and C311 contribute to the active site.

This sequence belongs to the peptidase C14B family.

Functionally, not required for DIF-induced autophagic cell death and necrotic cell death. The protein is Paracaspase (pcp) of Dictyostelium discoideum (Social amoeba).